The following is a 410-amino-acid chain: MTESKGFLRLAWARDHMPVIAEIRKRFQAEKPFKGIKVAMALHVEAKTGIFALLLKEGGAEVKMASCNPLSSDDSVVQSLKEDYGMPVFARKGETSEEYYEYLHRTLDVQPDIIIDDGGDLTKIVHTERKDLAKNILGGNEETTTGVQRLRAMERSGVLLFPMFDVNDANMKHLFDNRYGTGQSTLDGIMNATNLLIAGRTVVVAGYGYCGRGIAMRLKGMGANVIVTEIDPIKANEAIMDGFQVRRMNNAIRDADMVITATGMKDVVKYEDALVAKKNIVLANAGHFNNEVAVSEIEKRSLEVNEVREFVKRYRLENGNTVDIIADGRLVNLAAGQGHPVEIMDLSFALQALTAEYLVKNHDKLERKVYPVPADIDRYVAEIRLKQFGGELDQLNEEQIKYLNSWDEGT.

Positions 117 and 142 each coordinate substrate. 143-145 serves as a coordination point for NAD(+); that stretch reads TTT. Residues lysine 172 and aspartate 176 each coordinate substrate. NAD(+)-binding positions include asparagine 177, 206-211, glutamate 229, 285-287, and asparagine 332; these read GYGYCG and AGH.

It belongs to the adenosylhomocysteinase family. NAD(+) is required as a cofactor.

Its subcellular location is the cytoplasm. It catalyses the reaction S-adenosyl-L-homocysteine + H2O = L-homocysteine + adenosine. Its pathway is amino-acid biosynthesis; L-homocysteine biosynthesis; L-homocysteine from S-adenosyl-L-homocysteine: step 1/1. Functionally, may play a key role in the regulation of the intracellular concentration of adenosylhomocysteine. This Thermoplasma acidophilum (strain ATCC 25905 / DSM 1728 / JCM 9062 / NBRC 15155 / AMRC-C165) protein is Adenosylhomocysteinase.